Reading from the N-terminus, the 124-residue chain is Large ribosomal subunit protein bL12 (124 aa).

It belongs to the bacterial ribosomal protein bL12 family. As to quaternary structure, homodimer. Part of the ribosomal stalk of the 50S ribosomal subunit. Forms a multimeric L10(L12)X complex, where L10 forms an elongated spine to which 2 to 4 L12 dimers bind in a sequential fashion. Binds GTP-bound translation factors.

Forms part of the ribosomal stalk which helps the ribosome interact with GTP-bound translation factors. Is thus essential for accurate translation. The protein is Large ribosomal subunit protein bL12 of Chlorobium chlorochromatii (strain CaD3).